A 685-amino-acid chain; its full sequence is Protein hook (685 aa).

Residues 6–122 (MEIYESLIRW…RLLQLILGCA (117 aa)) form the Calponin-homology (CH) domain. Residues 134–570 (QIMELEESLQ…LLAADSRYKK (437 aa)) are a coiled coil. 3 disordered regions span residues 430–449 (AAED…SSDV), 593–625 (LEKP…SGRV), and 661–685 (PGQS…FAKK). Low complexity predominate over residues 602–623 (ASSSSATGSGGDASTLTSTGSG). Residues 661–670 (PGQSFLSRQR) are compositionally biased toward polar residues.

It belongs to the hook family. In terms of assembly, homodimer. Interacts with microtubules via its N-terminus.

It is found in the cytoplasm. The protein localises to the cytoskeleton. It localises to the endosome. Functionally, involved in endocytic trafficking. Probably acts as a cytoskeletal linker protein that tethers endosome vesicles to the cytoskeleton. In Aedes aegypti (Yellowfever mosquito), this protein is Protein hook.